The sequence spans 247 residues: Cell division protein ZapD (247 aa).

It belongs to the ZapD family. In terms of assembly, interacts with FtsZ.

It is found in the cytoplasm. In terms of biological role, cell division factor that enhances FtsZ-ring assembly. Directly interacts with FtsZ and promotes bundling of FtsZ protofilaments, with a reduction in FtsZ GTPase activity. This Shigella flexneri protein is Cell division protein ZapD.